The chain runs to 550 residues: Glucose-6-phosphate isomerase (550 aa).

The active-site Proton donor is the Glu-356. Residues His-387 and Lys-515 contribute to the active site.

The protein belongs to the GPI family.

It localises to the cytoplasm. The enzyme catalyses alpha-D-glucose 6-phosphate = beta-D-fructose 6-phosphate. Its pathway is carbohydrate biosynthesis; gluconeogenesis. It participates in carbohydrate degradation; glycolysis; D-glyceraldehyde 3-phosphate and glycerone phosphate from D-glucose: step 2/4. Catalyzes the reversible isomerization of glucose-6-phosphate to fructose-6-phosphate. The polypeptide is Glucose-6-phosphate isomerase (Syntrophobacter fumaroxidans (strain DSM 10017 / MPOB)).